Reading from the N-terminus, the 340-residue chain is MNIREAIAAVVARRDLTQAEAASVMEEIMNGTATPAQIAAFLTALHIKGETDAEIAGMAAVMREKATHVYFDGPVIDTCGTGGDGAHTFNISTTAAFVAAGAGLTVAKHGNRAMSSVCGSADVLEGLGVQIELDAEGVARCLRDAGIGFMFAPKFHPAMRFAGPVRREIGIRTVFNILGPLTNPARARYQVLGVASAALAEKLANALSRLDTVHALVVHGDGGVDELTLSGPNLIFEVRAGHALRQMIVAPEDVGLERAPREALRGGDVAYNVALVRAILSGEDRGPRRDVVLLNAAAALVAGDVAPDLATGVKMARASIDSGRALERLHRMIAVSRGEA.

Residues Gly-80, Gly-83 to Asp-84, Thr-88, Asn-90 to Thr-93, Lys-108 to Ser-116, and Ser-120 contribute to the 5-phospho-alpha-D-ribose 1-diphosphate site. Residue Gly-80 participates in anthranilate binding. Ser-92 contributes to the Mg(2+) binding site. Anthranilate is bound at residue Asn-111. Residue Arg-166 participates in anthranilate binding. The Mg(2+) site is built by Asp-225 and Glu-226.

Belongs to the anthranilate phosphoribosyltransferase family. As to quaternary structure, homodimer. The cofactor is Mg(2+).

It catalyses the reaction N-(5-phospho-beta-D-ribosyl)anthranilate + diphosphate = 5-phospho-alpha-D-ribose 1-diphosphate + anthranilate. It participates in amino-acid biosynthesis; L-tryptophan biosynthesis; L-tryptophan from chorismate: step 2/5. Functionally, catalyzes the transfer of the phosphoribosyl group of 5-phosphorylribose-1-pyrophosphate (PRPP) to anthranilate to yield N-(5'-phosphoribosyl)-anthranilate (PRA). This chain is Anthranilate phosphoribosyltransferase, found in Chloroflexus aggregans (strain MD-66 / DSM 9485).